Consider the following 489-residue polypeptide: Betaine aldehyde dehydrogenase (489 aa).

Positions 26 and 93 each coordinate K(+). 150-152 contributes to the NAD(+) binding site; sequence GAW. K162 acts as the Charge relay system in catalysis. 176 to 179 serves as a coordination point for NAD(+); that stretch reads KPSE. V180 serves as a coordination point for K(+). Residue 229 to 232 participates in NAD(+) binding; it reads GVET. A K(+)-binding site is contributed by L245. Residue E251 is the Proton acceptor of the active site. Residues G253, C285, and E386 each contribute to the NAD(+) site. C285 (nucleophile) is an active-site residue. Position 285 is a cysteine sulfenic acid (-SOH) (C285). K(+) is bound by residues K456 and G459. The active-site Charge relay system is the E463.

Belongs to the aldehyde dehydrogenase family. As to quaternary structure, dimer of dimers. K(+) serves as cofactor.

It catalyses the reaction betaine aldehyde + NAD(+) + H2O = glycine betaine + NADH + 2 H(+). It functions in the pathway amine and polyamine biosynthesis; betaine biosynthesis via choline pathway; betaine from betaine aldehyde: step 1/1. Involved in the biosynthesis of the osmoprotectant glycine betaine. Catalyzes the irreversible oxidation of betaine aldehyde to the corresponding acid. In Burkholderia pseudomallei (strain 1106a), this protein is Betaine aldehyde dehydrogenase.